We begin with the raw amino-acid sequence, 299 residues long: Pyrroline-5-carboxylate reductase 2 (299 aa).

The protein belongs to the pyrroline-5-carboxylate reductase family. Homodecamer; composed of 5 homodimers.

It catalyses the reaction L-proline + NADP(+) = (S)-1-pyrroline-5-carboxylate + NADPH + 2 H(+). It carries out the reaction L-proline + NAD(+) = (S)-1-pyrroline-5-carboxylate + NADH + 2 H(+). It functions in the pathway amino-acid biosynthesis; L-proline biosynthesis; L-proline from L-glutamate 5-semialdehyde: step 1/1. The chain is Pyrroline-5-carboxylate reductase 2 (pycr2) from Dictyostelium discoideum (Social amoeba).